The chain runs to 122 residues: ATP synthase epsilon chain (122 aa).

Belongs to the ATPase epsilon chain family. In terms of assembly, F-type ATPases have 2 components, CF(1) - the catalytic core - and CF(0) - the membrane proton channel. CF(1) has five subunits: alpha(3), beta(3), gamma(1), delta(1), epsilon(1). CF(0) has three main subunits: a, b and c.

It localises to the cell membrane. Its function is as follows. Produces ATP from ADP in the presence of a proton gradient across the membrane. The polypeptide is ATP synthase epsilon chain (Rhodococcus jostii (strain RHA1)).